A 366-amino-acid chain; its full sequence is Chorismate synthase (366 aa).

Residues Arg-48 and Arg-54 each coordinate NADP(+). Residues 125-127 (RSS), 237-238 (NA), Gly-277, 292-296 (KPTSS), and Arg-318 each bind FMN.

It belongs to the chorismate synthase family. Homotetramer. The cofactor is FMNH2.

The enzyme catalyses 5-O-(1-carboxyvinyl)-3-phosphoshikimate = chorismate + phosphate. Its pathway is metabolic intermediate biosynthesis; chorismate biosynthesis; chorismate from D-erythrose 4-phosphate and phosphoenolpyruvate: step 7/7. Functionally, catalyzes the anti-1,4-elimination of the C-3 phosphate and the C-6 proR hydrogen from 5-enolpyruvylshikimate-3-phosphate (EPSP) to yield chorismate, which is the branch point compound that serves as the starting substrate for the three terminal pathways of aromatic amino acid biosynthesis. This reaction introduces a second double bond into the aromatic ring system. This chain is Chorismate synthase, found in Acidovorax ebreus (strain TPSY) (Diaphorobacter sp. (strain TPSY)).